Reading from the N-terminus, the 507-residue chain is Extracellular elastase (507 aa).

The signal sequence occupies residues 1-28 (MKNFSKFALTSIAALTVASPLVNTEVDA). A propeptide spanning residues 29 to 207 (KDKVSATQNI…VVDKLNMIKE (179 aa)) is cleaved from the precursor. Ca(2+) is bound at residue Asp347. His351 is a binding site for Zn(2+). The active site involves Glu352. His355 and Glu375 together coordinate Zn(2+). Residues Asp386, Glu388, Asp389, Leu391, Glu394, Tyr397, Thr398, Val401, and Asp404 each contribute to the Ca(2+) site. His435 acts as the Proton donor in catalysis.

The protein belongs to the peptidase M4 family. Ca(2+) serves as cofactor. Zn(2+) is required as a cofactor.

The protein resides in the secreted. Protease that has a low substrate specificity. Glucagon is preferentially cleaved between aromatic (Phe) and hydrophobic (Val) amino acids. Hydrolyzes casein and elastin. This chain is Extracellular elastase (sepA), found in Staphylococcus epidermidis.